A 996-amino-acid chain; its full sequence is Protein psiR (996 aa).

An N-terminal signal peptide occupies residues 1–21 (MKKIILMLLLFSIFFILKSES). Residues Asn-79, Asn-117, Asn-323, Asn-396, Asn-428, Asn-474, Asn-500, Asn-645, and Asn-779 are each glycosylated (N-linked (GlcNAc...) asparagine). The region spanning 105-250 (QSLSNPNIYS…YDECGVCEGD (146 aa)) is the PA14 domain.

The protein belongs to the prespore-cell-inducing factor family.

It localises to the secreted. The protein is Protein psiR (psiR) of Dictyostelium discoideum (Social amoeba).